We begin with the raw amino-acid sequence, 299 residues long: Recombination-associated protein RdgC (299 aa).

Belongs to the RdgC family.

It is found in the cytoplasm. Its subcellular location is the nucleoid. Functionally, may be involved in recombination. This Cupriavidus necator (strain ATCC 17699 / DSM 428 / KCTC 22496 / NCIMB 10442 / H16 / Stanier 337) (Ralstonia eutropha) protein is Recombination-associated protein RdgC.